A 1216-amino-acid polypeptide reads, in one-letter code: Probable cation-transporting ATPase 13A5 (1216 aa).

5 helical membrane-spanning segments follow: residues 33-53 (RALC…MFYW), 198-218 (LLVK…LTLW), 222-242 (GYIE…VLSV), 401-421 (FMVF…GVYM), and 433-453 (MALI…LTIG). The active-site 4-aspartylphosphate intermediate is the D486. Residues N650 and N817 are each glycosylated (N-linked (GlcNAc...) asparagine). Mg(2+) contacts are provided by D848 and D852. A run of 6 helical transmembrane segments spans residues 896 to 916 (ALVS…IQFI), 933 to 950 (YLLQ…TMSI), 971 to 991 (LLLS…CTFL), 1040 to 1060 (FEGT…AFIF), 1075 to 1095 (LFSL…FCDF), and 1113 to 1133 (VSIL…EDAV).

The protein belongs to the cation transport ATPase (P-type) (TC 3.A.3) family. Type V subfamily. Specifically expressed in brain and stomach.

Its subcellular location is the membrane. The enzyme catalyses ATP + H2O = ADP + phosphate + H(+). The chain is Probable cation-transporting ATPase 13A5 (Atp13a5) from Mus musculus (Mouse).